The following is a 583-amino-acid chain: Radixin (583 aa).

The FERM domain occupies Ile-5–Arg-295. Lys-60–Lys-63 is an a 1,2-diacyl-sn-glycero-3-phospho-(1D-myo-inositol) binding site. Position 83 is an N6-succinyllysine (Lys-83). Lys-278 serves as a coordination point for a 1,2-diacyl-sn-glycero-3-phospho-(1D-myo-inositol). 3 disordered regions span residues Ala-309 to Glu-336, Glu-374 to Ala-407, and Lys-460 to Lys-526. Over residues Glu-374 to Lys-400 the composition is skewed to basic and acidic residues. Residues Ala-469 to Pro-480 are compositionally biased toward pro residues. Composition is skewed to basic and acidic residues over residues Glu-483–Asn-492 and Met-506–Lys-525. Thr-564 bears the Phosphothreonine; by ROCK2 mark.

As to quaternary structure, interacts with CPNE1 (via VWFA domain) and CPNE4 (via VWFA domain). Binds NHERF1. Interacts with NHERF1, NHERF2, LAYN, MME/NEP and ICAM2. Interacts (via FERM domain) with SPN/CD43 cytoplasmic tail. Interacts with CD44. Interacts with CLIC5; may work together in a complex which also includes EZR and MYO6 to stabilize linkages between the plasma membrane and subjacent actin cytoskeleton at the base of stereocilia. Post-translationally, phosphorylated by tyrosine-protein kinases. Phosphorylation by ROCK2 suppresses the head-to-tail association of the N-terminal and C-terminal halves resulting in an opened conformation which is capable of actin and membrane-binding.

The protein resides in the cell membrane. It localises to the cytoplasm. The protein localises to the cytoskeleton. It is found in the cleavage furrow. Its subcellular location is the cell projection. The protein resides in the microvillus. It localises to the stereocilium. With respect to regulation, a head-to-tail association, of the N-terminal and C-terminal halves results in a closed conformation (inactive form) which is incapable of actin or membrane-binding. Functionally, probably plays a crucial role in the binding of the barbed end of actin filaments to the plasma membrane. This Bos taurus (Bovine) protein is Radixin (RDX).